Consider the following 441-residue polypeptide: Endoglucanase E-2 (441 aa).

A signal peptide (tat-type signal) is located at residues 1–31 (MSPRPLRALLGAAAAALVSAAALAFPSQAAA). The segment at 32-320 (NDSPFYVNPN…YEMAIAAGGT (289 aa)) is catalytic. The active site involves D110. Cystine bridges form between C111/C156 and C263/C298. Catalysis depends on D148, which acts as the Proton donor. D296 (nucleophile) is an active-site residue. Residues 317-343 (AGGTNPNPNPNPTPTPTPTPTPPPGSS) form a disordered region. The linker stretch occupies residues 321-340 (NPNPNPNPTPTPTPTPTPPP). Pro residues predominate over residues 323–341 (NPNPNPTPTPTPTPTPPPG). Residues 339–441 (PPGSSGACTA…SVPTLTCAAS (103 aa)) form the CBM2 domain. An intrachain disulfide couples C346 to C438.

The protein belongs to the glycosyl hydrolase 6 (cellulase B) family. Homodimer. Predicted to be exported by the Tat system. The position of the signal peptide cleavage has been experimentally proven.

It carries out the reaction Endohydrolysis of (1-&gt;4)-beta-D-glucosidic linkages in cellulose, lichenin and cereal beta-D-glucans.. Its pathway is glycan metabolism; cellulose degradation. The chain is Endoglucanase E-2 (celB) from Thermobifida fusca (Thermomonospora fusca).